The sequence spans 122 residues: Large ribosomal subunit protein uL18 (122 aa).

The protein belongs to the universal ribosomal protein uL18 family. Part of the 50S ribosomal subunit; part of the 5S rRNA/L5/L18/L25 subcomplex. Contacts the 5S and 23S rRNAs.

This is one of the proteins that bind and probably mediate the attachment of the 5S RNA into the large ribosomal subunit, where it forms part of the central protuberance. This is Large ribosomal subunit protein uL18 from Citrifermentans bemidjiense (strain ATCC BAA-1014 / DSM 16622 / JCM 12645 / Bem) (Geobacter bemidjiensis).